We begin with the raw amino-acid sequence, 182 residues long: Oligoribonuclease (182 aa).

The Exonuclease domain maps to 8 to 171; the sequence is LIWIDLEMTG…DDIRESIKEL (164 aa). Tyr-129 is a catalytic residue.

Belongs to the oligoribonuclease family.

Its subcellular location is the cytoplasm. 3'-to-5' exoribonuclease specific for small oligoribonucleotides. This is Oligoribonuclease from Haemophilus influenzae (strain PittGG).